Reading from the N-terminus, the 179-residue chain is Inosine/xanthosine triphosphatase (179 aa).

Glu71 contributes to the Mg(2+) binding site. Residue 71–72 (EA) participates in substrate binding.

This sequence belongs to the YjjX NTPase family. Homodimer. Requires Mg(2+) as cofactor. Mn(2+) is required as a cofactor.

The enzyme catalyses XTP + H2O = XDP + phosphate + H(+). It catalyses the reaction ITP + H2O = IDP + phosphate + H(+). Phosphatase that hydrolyzes non-canonical purine nucleotides such as XTP and ITP to their respective diphosphate derivatives. Probably excludes non-canonical purines from DNA/RNA precursor pool, thus preventing their incorporation into DNA/RNA and avoiding chromosomal lesions. This Shewanella oneidensis (strain ATCC 700550 / JCM 31522 / CIP 106686 / LMG 19005 / NCIMB 14063 / MR-1) protein is Inosine/xanthosine triphosphatase.